A 215-amino-acid chain; its full sequence is Ribosomal RNA small subunit methyltransferase G (215 aa).

S-adenosyl-L-methionine-binding residues include Gly-71, Leu-76, and Arg-135.

It belongs to the methyltransferase superfamily. RNA methyltransferase RsmG family.

It localises to the cytoplasm. Specifically methylates the N7 position of a guanine in 16S rRNA. This chain is Ribosomal RNA small subunit methyltransferase G, found in Salinibacter ruber (strain DSM 13855 / M31).